Reading from the N-terminus, the 441-residue chain is Glutamate-1-semialdehyde 2,1-aminomutase (441 aa).

Lysine 273 carries the N6-(pyridoxal phosphate)lysine modification.

The protein belongs to the class-III pyridoxal-phosphate-dependent aminotransferase family. HemL subfamily. It depends on pyridoxal 5'-phosphate as a cofactor.

It is found in the cytoplasm. The enzyme catalyses (S)-4-amino-5-oxopentanoate = 5-aminolevulinate. Its pathway is porphyrin-containing compound metabolism; protoporphyrin-IX biosynthesis; 5-aminolevulinate from L-glutamyl-tRNA(Glu): step 2/2. The protein is Glutamate-1-semialdehyde 2,1-aminomutase of Pyrobaculum calidifontis (strain DSM 21063 / JCM 11548 / VA1).